A 518-amino-acid chain; its full sequence is Organic cation/carnitine transporter 3 (518 aa).

Residues 1–23 form a disordered region; sequence MADSTRPLLSDFNSSESNLPPPR. Residues 1 to 32 lie on the Cytoplasmic side of the membrane; sequence MADSTRPLLSDFNSSESNLPPPRSLEETIERC. A helical transmembrane segment spans residues 33–53; the sequence is IGDFGWAQFLQAALVSFAWFF. Topologically, residues 54-122 are extracellular; that stretch reads DAQQTFITVF…LQCAGSFLKG (69 aa). Asn83 and Asn94 each carry an N-linked (GlcNAc...) asparagine glycan. Residues 123 to 143 form a helical membrane-spanning segment; that stretch reads FPASSFFLGCLIGGLALSTLA. At 144–157 the chain is on the cytoplasmic side; the sequence is DSSLGRKNMLLLSC. Residues 158–178 traverse the membrane as a helical segment; the sequence is LIMSLSSMLTAFSTSIWVYAF. The Extracellular portion of the chain corresponds to 179-180; it reads LR. A helical membrane pass occupies residues 181-197; sequence FLNGCGRATIGTCALVL. 198-205 lines the ATP pocket; sequence STELVGKK. The Cytoplasmic portion of the chain corresponds to 198-210; that stretch reads STELVGKKWRGQV. Residues 211–231 traverse the membrane as a helical segment; the sequence is GAMGFFCFTLGFLSLPMLGYI. Residues 232–239 lie on the Extracellular side of the membrane; it reads NEGNSWRN. The chain crosses the membrane as a helical span at residues 240 to 259; it reads LYVWTSIPTLIYCCLVRSFV. The Cytoplasmic portion of the chain corresponds to 260–325; the sequence is RESPRWLIVK…LVRKSWSFRR (66 aa). Residues 326 to 346 form a helical membrane-spanning segment; that stretch reads LLAAMVVGFGIGMVYYGMPLA. Over 347–355 the chain is Extracellular; sequence LTNLNFNLY. A helical transmembrane segment spans residues 356–376; the sequence is LGVVFNALSEFPAFLITFFFI. Residues 377 to 383 lie on the Cytoplasmic side of the membrane; it reads DKINRRD. Residues 384-404 traverse the membrane as a helical segment; the sequence is ALIGFTALSGISSALIAVLGQ. Residues 405-410 lie on the Extracellular side of the membrane; sequence QLGSLQ. Residues 411 to 431 traverse the membrane as a helical segment; the sequence is IVLELVSFFSACTAFNMTLIY. Residues 432-443 are Cytoplasmic-facing; the sequence is TIEMFPTCVRNS. Residues 444–464 form a helical membrane-spanning segment; sequence AISMVRQALVFGGVFSPVMVA. At 465-470 the chain is on the extracellular side; the sequence is AGRENQ. Residues 471–491 form a helical membrane-spanning segment; that stretch reads FWSYGLFGLIIGLCGLFVFGL. Topologically, residues 492–518 are cytoplasmic; the sequence is PETRGSVLCDTMDEEEYKTLAKRQFIG.

It belongs to the major facilitator (TC 2.A.1) superfamily. Organic cation transporter (TC 2.A.1.19) family. Mostly expressed in siliques, mainly in young seeds. Present in stems (cortical cells and parenchyma cells), at the basis of secondary inflorescences, and at the base of trichomes.

Its subcellular location is the vacuole membrane. In terms of biological role, high affinity carnitine transporter involved in the active cellular uptake of carnitine. Also transports organic cations. The sequence is that of Organic cation/carnitine transporter 3 (OCT3) from Arabidopsis thaliana (Mouse-ear cress).